We begin with the raw amino-acid sequence, 136 residues long: Protein BUNDLE SHEATH DEFECTIVE 2, chloroplastic (136 aa).

The transit peptide at 1–56 (MANSLCFFSSPPTFCFQSPSKNPKPSHFFSTNDNTSSLVQKRELLQTSRSQSFEVK) directs the protein to the chloroplast. The segment at 62-133 (PQGTKPNSLV…AGFIGGFLST (72 aa)) adopts a CR-type zinc-finger fold. Zn(2+) contacts are provided by C72, C75, E78, C80, C83, C86, C107, C110, E115, C118, and C121.

The protein belongs to the BSD2 chaperone family. As to quaternary structure, interacts with the RuBisCo large subunit (RbcL) assembled as an intermediate complex made of eight RbcL and eight BSD2 subunits.

The protein localises to the plastid. It is found in the chloroplast stroma. Chloroplast chaperone required for RuBisCo biogenesis and translational regulation of the RuBisCo large subunit (RbcL). Stabilizes an end-state assembly intermediate of eight RbcL subunits until the small subunits (RBCSs) become available to produce a complete stable RuBisCo complex containing eight small and eight large subunits. The protein is Protein BUNDLE SHEATH DEFECTIVE 2, chloroplastic of Arabidopsis thaliana (Mouse-ear cress).